The chain runs to 217 residues: 3,4-dihydroxy-2-butanone 4-phosphate synthase (217 aa).

D-ribulose 5-phosphate is bound by residues 37–38, aspartate 42, 150–154, and glutamate 174; these read RE and RRGHT. Residue glutamate 38 coordinates Mg(2+). Residue histidine 153 participates in Mg(2+) binding.

Belongs to the DHBP synthase family. In terms of assembly, homodimer. It depends on Mg(2+) as a cofactor. Mn(2+) serves as cofactor.

It catalyses the reaction D-ribulose 5-phosphate = (2S)-2-hydroxy-3-oxobutyl phosphate + formate + H(+). It participates in cofactor biosynthesis; riboflavin biosynthesis; 2-hydroxy-3-oxobutyl phosphate from D-ribulose 5-phosphate: step 1/1. Catalyzes the conversion of D-ribulose 5-phosphate to formate and 3,4-dihydroxy-2-butanone 4-phosphate. The chain is 3,4-dihydroxy-2-butanone 4-phosphate synthase from Shewanella sp. (strain W3-18-1).